A 219-amino-acid chain; its full sequence is Ras-related protein RABA5d (219 aa).

The residue at position 2 (Ser-2) is an N-acetylserine. 19–26 provides a ligand contact to GTP; sequence GDSAVGKS. Residues 41–49 carry the Effector region motif; it reads SKATIGVEF. GTP-binding positions include 67–71, 125–128, and 155–156; these read DTAGQ, NKCD, and SA. 2 S-geranylgeranyl cysteine lipidation sites follow: Cys-215 and Cys-216.

Belongs to the small GTPase superfamily. Rab family.

Its subcellular location is the cell membrane. In terms of biological role, intracellular vesicle trafficking and protein transport. The protein is Ras-related protein RABA5d (RABA5D) of Arabidopsis thaliana (Mouse-ear cress).